The chain runs to 325 residues: Aldose 1-epimerase (325 aa).

73-74 (NR) serves as a coordination point for substrate. The active-site Proton donor is the histidine 177. Aspartate 230 provides a ligand contact to substrate. Catalysis depends on glutamate 283, which acts as the Proton acceptor.

This sequence belongs to the aldose epimerase family.

It catalyses the reaction alpha-D-glucose = beta-D-glucose. The protein operates within carbohydrate metabolism; hexose metabolism. This is Aldose 1-epimerase (galM) from Bacillus subtilis (strain 168).